The following is a 364-amino-acid chain: Aminomethyltransferase (364 aa).

Belongs to the GcvT family. As to quaternary structure, the glycine cleavage system is composed of four proteins: P, T, L and H.

The enzyme catalyses N(6)-[(R)-S(8)-aminomethyldihydrolipoyl]-L-lysyl-[protein] + (6S)-5,6,7,8-tetrahydrofolate = N(6)-[(R)-dihydrolipoyl]-L-lysyl-[protein] + (6R)-5,10-methylene-5,6,7,8-tetrahydrofolate + NH4(+). Functionally, the glycine cleavage system catalyzes the degradation of glycine. This is Aminomethyltransferase from Shewanella denitrificans (strain OS217 / ATCC BAA-1090 / DSM 15013).